A 178-amino-acid polypeptide reads, in one-letter code: Interleukin-10 (178 aa).

An N-terminal signal peptide occupies residues M1–A18. Intrachain disulfides connect C30/C126 and C80/C132. N134 carries N-linked (GlcNAc...) asparagine glycosylation.

Belongs to the IL-10 family. As to quaternary structure, homodimer. Interacts with IL10RA and IL10RB.

It localises to the secreted. In terms of biological role, major immune regulatory cytokine that acts on many cells of the immune system where it has profound anti-inflammatory functions, limiting excessive tissue disruption caused by inflammation. Mechanistically, IL10 binds to its heterotetrameric receptor comprising IL10RA and IL10RB leading to JAK1 and STAT2-mediated phosphorylation of STAT3. In turn, STAT3 translocates to the nucleus where it drives expression of anti-inflammatory mediators. Targets antigen-presenting cells (APCs) such as macrophages and monocytes and inhibits their release of pro-inflammatory cytokines including granulocyte-macrophage colony-stimulating factor /GM-CSF, granulocyte colony-stimulating factor/G-CSF, IL-1 alpha, IL-1 beta, IL-6, IL-8 and TNF-alpha. Also interferes with antigen presentation by reducing the expression of MHC-class II and co-stimulatory molecules, thereby inhibiting their ability to induce T cell activation. In addition, controls the inflammatory response of macrophages by reprogramming essential metabolic pathways including mTOR signaling. This is Interleukin-10 (IL10) from Bos taurus (Bovine).